Here is a 303-residue protein sequence, read N- to C-terminus: Ribosomal protein L11 methyltransferase (303 aa).

S-adenosyl-L-methionine-binding residues include Thr-146, Gly-167, Asp-189, and Asn-236.

Belongs to the methyltransferase superfamily. PrmA family.

The protein resides in the cytoplasm. It catalyses the reaction L-lysyl-[protein] + 3 S-adenosyl-L-methionine = N(6),N(6),N(6)-trimethyl-L-lysyl-[protein] + 3 S-adenosyl-L-homocysteine + 3 H(+). Methylates ribosomal protein L11. This is Ribosomal protein L11 methyltransferase from Acinetobacter baylyi (strain ATCC 33305 / BD413 / ADP1).